A 924-amino-acid chain; its full sequence is Type II inositol 3,4-bisphosphate 4-phosphatase (924 aa).

The segment covering 1–13 (MEIKEEGASEEGQ) has biased composition (basic and acidic residues). Disordered stretches follow at residues 1-25 (MEIK…SDPG), 481-516 (ILKK…HSDY), and 546-569 (DGGS…DAIP). The C2 domain occupies 23 to 165 (DPGDCQFTSI…LKSKEQLLVL (143 aa)).

Belongs to the inositol 3,4-bisphosphate 4-phosphatase family.

It catalyses the reaction a 1,2-diacyl-sn-glycero-3-phospho-(1D-myo-inositol-3,4-bisphosphate) + H2O = a 1,2-diacyl-sn-glycero-3-phospho-(1D-myo-inositol-3-phosphate) + phosphate. It carries out the reaction 1D-myo-inositol 1,3,4-trisphosphate + H2O = 1D-myo-inositol 1,3-bisphosphate + phosphate. The catalysed reaction is 1D-myo-inositol 3,4-bisphosphate + H2O = 1D-myo-inositol 3-phosphate + phosphate. Its pathway is signal transduction; phosphatidylinositol signaling pathway. Its activity is regulated as follows. Strongly inhibited by inositol hexakisphosphate. In terms of biological role, catalyzes the hydrolysis of the 4-position phosphate of phosphatidylinositol 3,4-bisphosphate, inositol 1,3,4-trisphosphate and inositol 3,4-bisphosphate. Plays a role in the late stages of macropinocytosis by dephosphorylating phosphatidylinositol 3,4-bisphosphate in membrane ruffles. Antagonizes the PI3K-AKT/PKB signaling pathway by dephosphorylating phosphoinositides and thereby modulating cell cycle progression and cell survival. In Pongo abelii (Sumatran orangutan), this protein is Type II inositol 3,4-bisphosphate 4-phosphatase (INPP4B).